A 530-amino-acid polypeptide reads, in one-letter code: Ubiquitin carboxyl-terminal hydrolase 17-like protein 21 (530 aa).

The USP domain occupies 80–375 (AGLQNMGNTC…QAYVLFYIQK (296 aa)). The active-site Nucleophile is C89. The active-site Proton acceptor is the H334. Composition is skewed to basic and acidic residues over residues 382–392 (SESVSRGREPR) and 398–412 (DTDR…KRDH). 2 disordered regions span residues 382 to 412 (SESV…KRDH) and 477 to 530 (NHHP…LVCQ). The span at 493 to 505 (TPTHQESMNTGTL) shows a compositional bias: polar residues. Basic residues predominate over residues 510–524 (GRARRSKGKNKHSKR).

Belongs to the peptidase C19 family. USP17 subfamily.

It localises to the nucleus. Its subcellular location is the endoplasmic reticulum. It catalyses the reaction Thiol-dependent hydrolysis of ester, thioester, amide, peptide and isopeptide bonds formed by the C-terminal Gly of ubiquitin (a 76-residue protein attached to proteins as an intracellular targeting signal).. Functionally, deubiquitinating enzyme that removes conjugated ubiquitin from specific proteins to regulate different cellular processes that may include cell proliferation, progression through the cell cycle, apoptosis, cell migration, and the cellular response to viral infection. This chain is Ubiquitin carboxyl-terminal hydrolase 17-like protein 21 (USP17L21), found in Homo sapiens (Human).